A 192-amino-acid polypeptide reads, in one-letter code: Flagellar transcriptional regulator FlhC (192 aa).

Positions 137, 140, 157, and 160 each coordinate Zn(2+).

Belongs to the FlhC family. As to quaternary structure, heterohexamer composed of two FlhC and four FlhD subunits. Each FlhC binds a FlhD dimer, forming a heterotrimer, and a hexamer assembles by dimerization of two heterotrimers. It depends on Zn(2+) as a cofactor.

It is found in the cytoplasm. Its function is as follows. Functions in complex with FlhD as a master transcriptional regulator that regulates transcription of several flagellar and non-flagellar operons by binding to their promoter region. Activates expression of class 2 flagellar genes, including fliA, which is a flagellum-specific sigma factor that turns on the class 3 genes. Also regulates genes whose products function in a variety of physiological pathways. The polypeptide is Flagellar transcriptional regulator FlhC (Escherichia coli O6:H1 (strain CFT073 / ATCC 700928 / UPEC)).